A 301-amino-acid chain; its full sequence is Probable porphobilinogen deaminase (301 aa).

An S-(dipyrrolylmethanemethyl)cysteine modification is found at cysteine 241.

The protein belongs to the HMBS family. It depends on dipyrromethane as a cofactor.

The catalysed reaction is 4 porphobilinogen + H2O = hydroxymethylbilane + 4 NH4(+). The protein operates within porphyrin-containing compound metabolism; protoporphyrin-IX biosynthesis; coproporphyrinogen-III from 5-aminolevulinate: step 2/4. Functionally, tetrapolymerization of the monopyrrole PBG into the hydroxymethylbilane pre-uroporphyrinogen in several discrete steps. This chain is Probable porphobilinogen deaminase, found in Pyrobaculum islandicum (strain DSM 4184 / JCM 9189 / GEO3).